Consider the following 58-residue polypeptide: Large ribosomal subunit protein uL30 (58 aa).

The protein belongs to the universal ribosomal protein uL30 family. Part of the 50S ribosomal subunit.

This is Large ribosomal subunit protein uL30 from Trichlorobacter lovleyi (strain ATCC BAA-1151 / DSM 17278 / SZ) (Geobacter lovleyi).